We begin with the raw amino-acid sequence, 241 residues long: Small ribosomal subunit protein uS2 (241 aa).

The protein belongs to the universal ribosomal protein uS2 family.

The polypeptide is Small ribosomal subunit protein uS2 (Buchnera aphidicola subsp. Cinara cedri (strain Cc)).